We begin with the raw amino-acid sequence, 290 residues long: Glutamate racemase (290 aa).

Substrate contacts are provided by residues 24 to 25 (DS) and 56 to 57 (YG). Residue cysteine 87 is the Proton donor/acceptor of the active site. 88 to 89 (NT) contributes to the substrate binding site. Cysteine 199 functions as the Proton donor/acceptor in the catalytic mechanism. 200-201 (TH) lines the substrate pocket. Positions 271–290 (GADGASLPDPPSPRIELTTT) are disordered.

It belongs to the aspartate/glutamate racemases family.

It catalyses the reaction L-glutamate = D-glutamate. It participates in cell wall biogenesis; peptidoglycan biosynthesis. Functionally, provides the (R)-glutamate required for cell wall biosynthesis. The protein is Glutamate racemase of Deinococcus radiodurans (strain ATCC 13939 / DSM 20539 / JCM 16871 / CCUG 27074 / LMG 4051 / NBRC 15346 / NCIMB 9279 / VKM B-1422 / R1).